An 873-amino-acid chain; its full sequence is Coatomer subunit gamma-2 (873 aa).

A compositionally biased stretch (basic and acidic residues) spans M1–E11. A disordered region spans residues M1–H21. 6 HEAT repeats span residues T64–D101, R283–S320, A321–S355, S356–R392, S395–E430, and P467–D504.

Belongs to the COPG family. Oligomeric complex.

Its subcellular location is the cytoplasm. It is found in the golgi apparatus membrane. It localises to the cytoplasmic vesicle. The protein resides in the COPI-coated vesicle membrane. In terms of biological role, the coatomer is a cytosolic protein complex that binds to dilysine motifs and reversibly associates with Golgi non-clathrin-coated vesicles, which further mediate biosynthetic protein transport from the ER, via the Golgi up to the trans Golgi network. Coatomer complex is required for budding from Golgi membranes, and is essential for the retrograde Golgi-to-ER transport of dilysine-tagged proteins. The protein is Coatomer subunit gamma-2 (copg2) of Danio rerio (Zebrafish).